A 177-amino-acid chain; its full sequence is ATP synthase subunit delta (177 aa).

The protein belongs to the ATPase delta chain family. F-type ATPases have 2 components, F(1) - the catalytic core - and F(0) - the membrane proton channel. F(1) has five subunits: alpha(3), beta(3), gamma(1), delta(1), epsilon(1). F(0) has three main subunits: a(1), b(2) and c(10-14). The alpha and beta chains form an alternating ring which encloses part of the gamma chain. F(1) is attached to F(0) by a central stalk formed by the gamma and epsilon chains, while a peripheral stalk is formed by the delta and b chains.

It localises to the cell membrane. In terms of biological role, f(1)F(0) ATP synthase produces ATP from ADP in the presence of a proton or sodium gradient. F-type ATPases consist of two structural domains, F(1) containing the extramembraneous catalytic core and F(0) containing the membrane proton channel, linked together by a central stalk and a peripheral stalk. During catalysis, ATP synthesis in the catalytic domain of F(1) is coupled via a rotary mechanism of the central stalk subunits to proton translocation. Its function is as follows. This protein is part of the stalk that links CF(0) to CF(1). It either transmits conformational changes from CF(0) to CF(1) or is implicated in proton conduction. The chain is ATP synthase subunit delta from Streptococcus suis (strain 98HAH33).